The primary structure comprises 172 residues: Small t antigen (172 aa).

At M1 the chain carries N-acetylmethionine; by host. Residues 12-75 (ELMDLLGLER…VKVAHQPDFG (64 aa)) form the J domain. Residues 101 to 114 (CATKPSAHCPCMLC) form a C4-type; atypical zinc finger. The H1C3-type; atypical zinc-finger motif lies at 120 to 141 (HVYRKFLRRDPLVWIDCYCFDC).

As to quaternary structure, interacts with host PPP2R1A; the interaction inhibits PP2A activity.

Its subcellular location is the host cytoplasm. It is found in the host nucleus. Functionally, promotes efficient viral genome replication by accelerating both G1 and S phase progression of the cell cycle. Inhibits host PP2A by binding to the A subunit, thereby displacing lower affinity regulatory B subunit. Inactivation of PP2A in turn results in the transactivation of cyclin A and cyclin D1 promoters. Late during the infection cycle, ST may induce dephosphorylation of host MTOR, leading to the inhibition of cap-dependent translation. May establish and maintain high levels of viral genomes during persistent infection in cell culture. The polypeptide is Small t antigen (Simian virus 12 (strain wt100) (SV-12)).